The primary structure comprises 78 residues: D-alanyl carrier protein (78 aa).

The region spanning 1 to 78 is the Carrier domain; sequence MDFNQEVLSV…QIIKQLNELR (78 aa). An O-(pantetheine 4'-phosphoryl)serine modification is found at Ser36.

It belongs to the DltC family. Post-translationally, 4'-phosphopantetheine is transferred from CoA to a specific serine of apo-DCP.

It is found in the cytoplasm. It participates in cell wall biogenesis; lipoteichoic acid biosynthesis. In terms of biological role, carrier protein involved in the D-alanylation of lipoteichoic acid (LTA). The loading of thioester-linked D-alanine onto DltC is catalyzed by D-alanine--D-alanyl carrier protein ligase DltA. The DltC-carried D-alanyl group is further transferred to cell membrane phosphatidylglycerol (PG) by forming an ester bond, probably catalyzed by DltD. D-alanylation of LTA plays an important role in modulating the properties of the cell wall in Gram-positive bacteria, influencing the net charge of the cell wall. The sequence is that of D-alanyl carrier protein from Bacillus licheniformis (strain ATCC 14580 / DSM 13 / JCM 2505 / CCUG 7422 / NBRC 12200 / NCIMB 9375 / NCTC 10341 / NRRL NRS-1264 / Gibson 46).